The sequence spans 156 residues: Small ribosomal subunit protein uS7c (156 aa).

Belongs to the universal ribosomal protein uS7 family. Part of the 30S ribosomal subunit.

It is found in the plastid. It localises to the chloroplast. One of the primary rRNA binding proteins, it binds directly to 16S rRNA where it nucleates assembly of the head domain of the 30S subunit. The sequence is that of Small ribosomal subunit protein uS7c (rps7) from Nephroselmis olivacea (Green alga).